The primary structure comprises 277 residues: B3 domain-containing protein At3g19184 (277 aa).

A disordered region spans residues 33–94; sequence QSLRVSSSSS…LERRPRRSSR (62 aa). Positions 130–221 form a DNA-binding region, TF-B3; sequence FTKPMLQSHV…TFKVYIIRVN (92 aa). Acidic residues predominate over residues 224–250; that stretch reads ANNDSDGNEVNDDDSDGNEEDRDNDNE. The segment at 224–277 is disordered; sequence ANNDSDGNEVNDDDSDGNEEDRDNDNESNEKQKETVSEGRQLRSSGKRKRRGRK. A compositionally biased stretch (basic and acidic residues) spans 251 to 264; the sequence is SNEKQKETVSEGRQ. Residues 268 to 277 show a composition bias toward basic residues; that stretch reads SGKRKRRGRK.

Its subcellular location is the nucleus. The chain is B3 domain-containing protein At3g19184 from Arabidopsis thaliana (Mouse-ear cress).